The chain runs to 138 residues: ATP synthase epsilon chain (138 aa).

This sequence belongs to the ATPase epsilon chain family. F-type ATPases have 2 components, CF(1) - the catalytic core - and CF(0) - the membrane proton channel. CF(1) has five subunits: alpha(3), beta(3), gamma(1), delta(1), epsilon(1). CF(0) has three main subunits: a, b and c.

The protein localises to the cellular thylakoid membrane. Functionally, produces ATP from ADP in the presence of a proton gradient across the membrane. This is ATP synthase epsilon chain from Microcystis aeruginosa (strain NIES-843 / IAM M-2473).